Consider the following 260-residue polypeptide: Achaete-scute homolog 2 (260 aa).

2 disordered regions span residues 85-126 and 191-239; these read AGAC…RNER and PATR…EDSS. 2 stretches are compositionally biased toward low complexity: residues 110-121 and 200-218; these read ATEASSSSAAVA and TQPS…STSP. One can recognise a bHLH domain in the interval 118-170; the sequence is AAVARRNERERNRVKLVNLGFQALRQHVPHGGANKKLSKVETLRSAVEYIRAL.

In terms of assembly, efficient DNA binding requires dimerization with another bHLH protein. Forms heterodimers with bHLH transcription factor TCF3. May not heterodimerise with bHLH protein HAND1. Expressed in Schwann cells in the peripheral nerve (at protein level). Also expressed by endothelial cells (at protein level). May be expressed in neuronal precursor cells.

The protein localises to the nucleus. The protein resides in the cytoplasm. In terms of biological role, transcription factor. Binds to E-box motifs 5'-CANNTG-3' in the regulatory elements of target genes, probably as a heterodimer with another basic helix-loop-helix (bHLH) protein such as the transcription factor TCF3. May bind both open and closed chromatin, acting as a pioneer transcription factor to allow other factors to bind and activate lineage-specific genes. Required during post-implantation development for the generation of some differentiated trophoblast cell types. Transcriptional activity of ASCL2 may be antagonised in a subset of trophoblast cells by bHLH transcription factor HAND1, perhaps by competing for dimerization with other bHLH proteins. Involved in differentiation and function of follicular T-helper (Tfh) cells, thereby playing a role in germinal center responses; probably modulates expression of genes involved in Tfh cell function, such as BCL6. May also act as a suppressor of Th1-, Th2- and Th17-cell differentiation. Induces the formation of stem cells in intestinal crypts in vitro, synergistically activating transcription of target genes, such as SOX9, together with TCF4/beta-catenin. May form a bistable transcriptional switch, controlling expression of its own gene together with Wnt/R-spondin signaling, and thereby maintaining stem cell characteristics. Modulates expression of target genes, including perhaps down-regulating EGR1/Krox24 and chemokine CXCL10/Mob-1 and up-regulating CXCR4 and CDKN1C/p57kip2, in Schwann cells. May play a role in reducing proliferation of Schwann cells, perhaps acting via modulation of expression of CDKN1C. May be dispensable for blastocyst formation and later embryonic function. May be involved in the determination of neuronal precursors. This is Achaete-scute homolog 2 (Ascl2) from Rattus norvegicus (Rat).